The chain runs to 402 residues: Multidrug resistance protein MdtH (402 aa).

The Cytoplasmic portion of the chain corresponds to M1–K12. Residues Y13–I33 traverse the membrane as a helical segment. The Periplasmic portion of the chain corresponds to S34–E98. A helical transmembrane segment spans residues P99–F116. The Cytoplasmic segment spans residues D117–S138. The helical transmembrane segment at L139–L159 threads the bilayer. Over Q160–R164 the chain is Periplasmic. Residues L165–L185 form a helical membrane-spanning segment. At P186 to Y213 the chain is on the cytoplasmic side. The chain crosses the membrane as a helical span at residues V214–M234. Over V235–A243 the chain is Periplasmic. A helical transmembrane segment spans residues A244–A264. Topologically, residues R265 to R276 are cytoplasmic. Residues L277 to L297 form a helical membrane-spanning segment. Residues Q298–Q299 lie on the Periplasmic side of the membrane. Residues L300–T320 traverse the membrane as a helical segment. Topologically, residues L321 to R339 are cytoplasmic. The helical transmembrane segment at L340–G360 threads the bilayer. Residues K361–E367 lie on the Periplasmic side of the membrane. The chain crosses the membrane as a helical span at residues L368–F388. At S389–A402 the chain is on the cytoplasmic side.

It belongs to the major facilitator superfamily. DHA1 family. MdtH (TC 2.A.1.2.21) subfamily.

Its subcellular location is the cell inner membrane. The polypeptide is Multidrug resistance protein MdtH (Salmonella paratyphi B (strain ATCC BAA-1250 / SPB7)).